The sequence spans 70 residues: Small ribosomal subunit protein bS21 (70 aa).

The interval 40 to 70 is disordered; the sequence is KPTAERKRKHAAAVKRHYKRIRSQQLPPRLY. The span at 45-61 shows a compositional bias: basic residues; it reads RKRKHAAAVKRHYKRIR.

This sequence belongs to the bacterial ribosomal protein bS21 family.

This is Small ribosomal subunit protein bS21 from Bordetella parapertussis (strain 12822 / ATCC BAA-587 / NCTC 13253).